We begin with the raw amino-acid sequence, 358 residues long: 4-hydroxy-3-methylbut-2-en-1-yl diphosphate synthase (flavodoxin) (358 aa).

[4Fe-4S] cluster-binding residues include cysteine 270, cysteine 273, cysteine 305, and glutamate 312.

The protein belongs to the IspG family. The cofactor is [4Fe-4S] cluster.

It catalyses the reaction (2E)-4-hydroxy-3-methylbut-2-enyl diphosphate + oxidized [flavodoxin] + H2O + 2 H(+) = 2-C-methyl-D-erythritol 2,4-cyclic diphosphate + reduced [flavodoxin]. It functions in the pathway isoprenoid biosynthesis; isopentenyl diphosphate biosynthesis via DXP pathway; isopentenyl diphosphate from 1-deoxy-D-xylulose 5-phosphate: step 5/6. Functionally, converts 2C-methyl-D-erythritol 2,4-cyclodiphosphate (ME-2,4cPP) into 1-hydroxy-2-methyl-2-(E)-butenyl 4-diphosphate. The chain is 4-hydroxy-3-methylbut-2-en-1-yl diphosphate synthase (flavodoxin) from Vesicomyosocius okutanii subsp. Calyptogena okutanii (strain HA).